Here is a 151-residue protein sequence, read N- to C-terminus: Minor capsid protein P12 (151 aa).

Hydrophobic stretches follow at residues Phe23–Tyr43 and Val46–Phe66. The cysteines at positions 112 and 120 are disulfide-linked.

Interacts with the major capsid protein.

The protein resides in the virion. In terms of biological role, one of the minor capsid proteins that constitute a network internal to the major capsid proteins and outside the lipid membrane. The minor capsid protein P12 does not serve a cross-linking function between neighboring capsomers, it may play a role in the viral capsid assembly. This is Minor capsid protein P12 from Paramecium bursaria Chlorella virus 1 (PBCV-1).